A 122-amino-acid polypeptide reads, in one-letter code: MARPIYVRFDVPPELASKSLEALELARDTGRIKKGTNEATKAVERGVAKLVIIGEDVEPPEIVAHLPPLCEEKNTPYVYVKKQSDVGAAAGLSVKSAAAAIIEPGKGKELLEEIIQKLQALK.

The protein belongs to the eukaryotic ribosomal protein eL8 family. As to quaternary structure, part of the 50S ribosomal subunit. Probably part of the RNase P complex.

It is found in the cytoplasm. Its function is as follows. Multifunctional RNA-binding protein that recognizes the K-turn motif in ribosomal RNA, the RNA component of RNase P, box H/ACA, box C/D and box C'/D' sRNAs. The protein is Large ribosomal subunit protein eL8 of Methanothrix thermoacetophila (strain DSM 6194 / JCM 14653 / NBRC 101360 / PT) (Methanosaeta thermophila).